The following is a 215-amino-acid chain: UPF0502 protein YceH (215 aa).

An N6-acetyllysine modification is found at K80.

It belongs to the UPF0502 family.

The protein is UPF0502 protein YceH of Escherichia coli O127:H6 (strain E2348/69 / EPEC).